The primary structure comprises 383 residues: MPSGGRGRPRLQVGERSLLERPSPPKRRLIPRAQLLPQLLLALTVASVFYTIWRIWHSQTEELPLGRELRGPLIGSLPEARVRRVVGQLDPHRLWNTFLRPLLVVRTPGSPGNLQVRKFLEATLRTLSAGWHIELDSFTASTPVGPLDFSNVVATLDPGAARHLTLACHYDSKLFPSDSAPFVGATDSAVPCSLLLELAQALDQELGKAKERAAPMTLQLIFLDGEEALKQWGPKDSLYGSRHLAQLMESTPHGLGSTRIQAIELFMLLDLLGAPNPTFYSHFPRTARWFHRLRSIEKRLHRLNLLQSHPWEVMYFQTGEPPGSVEDDHIPFLRRGVPVLHLIATPFPSVWHTSDDSEANLHPPTVHNLSRILAVFLAEYLGL.

A disordered region spans residues 1–25 (MPSGGRGRPRLQVGERSLLERPSPP). The chain crosses the membrane as a helical span at residues 35-57 (LLPQLLLALTVASVFYTIWRIWH). Cys-168 and Cys-192 are oxidised to a cystine. Asp-187 serves as a coordination point for Zn(2+). Glu-226 (proton acceptor) is an active-site residue. Glu-227 contacts Zn(2+). Asp-270 functions as the Proton acceptor in the catalytic mechanism. Position 352 (His-352) interacts with Zn(2+).

This sequence belongs to the glutaminyl-peptide cyclotransferase family.

The protein localises to the golgi apparatus membrane. The enzyme catalyses N-terminal L-glutaminyl-[peptide] = N-terminal 5-oxo-L-prolyl-[peptide] + NH4(+). Its function is as follows. Responsible for the biosynthesis of pyroglutamyl peptides. The sequence is that of Glutaminyl-peptide cyclotransferase-like protein (QPCTL) from Bos taurus (Bovine).